Reading from the N-terminus, the 341-residue chain is Glyceraldehyde-3-phosphate dehydrogenase 2 (341 aa).

NAD(+) is bound by residues 13-14 (RI), D35, and K85. D-glyceraldehyde 3-phosphate-binding positions include 157–159 (SCT), T188, 217–218 (TG), and R240. The active-site Nucleophile is the C158. N322 is an NAD(+) binding site.

Belongs to the glyceraldehyde-3-phosphate dehydrogenase family. In terms of assembly, homotetramer.

It is found in the cytoplasm. The enzyme catalyses D-glyceraldehyde 3-phosphate + phosphate + NAD(+) = (2R)-3-phospho-glyceroyl phosphate + NADH + H(+). The protein operates within carbohydrate degradation; glycolysis; pyruvate from D-glyceraldehyde 3-phosphate: step 1/5. This chain is Glyceraldehyde-3-phosphate dehydrogenase 2, found in Caenorhabditis briggsae.